Consider the following 453-residue polypeptide: tRNA modification GTPase MnmE (453 aa).

Positions 22, 79, and 119 each coordinate (6S)-5-formyl-5,6,7,8-tetrahydrofolate. The TrmE-type G domain occupies 215–376; sequence GMKVVIAGRP…LREHLKACMG (162 aa). Asn-225 contacts K(+). GTP-binding positions include 225–230, 244–250, 269–272, and 334–337; these read NAGKSS, TEIAGTT, DTAG, and NKAD. Ser-229 lines the Mg(2+) pocket. K(+) is bound by residues Thr-244, Ile-246, and Thr-249. A Mg(2+)-binding site is contributed by Thr-250. Lys-453 serves as a coordination point for (6S)-5-formyl-5,6,7,8-tetrahydrofolate.

It belongs to the TRAFAC class TrmE-Era-EngA-EngB-Septin-like GTPase superfamily. TrmE GTPase family. As to quaternary structure, homodimer. Heterotetramer of two MnmE and two MnmG subunits. The cofactor is K(+).

Its subcellular location is the cytoplasm. Exhibits a very high intrinsic GTPase hydrolysis rate. Involved in the addition of a carboxymethylaminomethyl (cmnm) group at the wobble position (U34) of certain tRNAs, forming tRNA-cmnm(5)s(2)U34. The sequence is that of tRNA modification GTPase MnmE from Aeromonas hydrophila subsp. hydrophila (strain ATCC 7966 / DSM 30187 / BCRC 13018 / CCUG 14551 / JCM 1027 / KCTC 2358 / NCIMB 9240 / NCTC 8049).